The chain runs to 136 residues: Large ribosomal subunit protein uL16 (136 aa).

This sequence belongs to the universal ribosomal protein uL16 family. Part of the 50S ribosomal subunit.

In terms of biological role, binds 23S rRNA and is also seen to make contacts with the A and possibly P site tRNAs. This Sodalis glossinidius (strain morsitans) protein is Large ribosomal subunit protein uL16.